The following is a 231-amino-acid chain: 2,3-bisphosphoglycerate-dependent phosphoglycerate mutase (231 aa).

Residues 8–15, 21–22, Arg-60, 87–90, Lys-98, 114–115, and 183–184 each bind substrate; these read RHGESEWN, TG, ERHY, RR, and GN. The active-site Tele-phosphohistidine intermediate is His-9. The active-site Proton donor/acceptor is Glu-87.

Belongs to the phosphoglycerate mutase family. BPG-dependent PGAM subfamily.

It carries out the reaction (2R)-2-phosphoglycerate = (2R)-3-phosphoglycerate. It participates in carbohydrate degradation; glycolysis; pyruvate from D-glyceraldehyde 3-phosphate: step 3/5. Its function is as follows. Catalyzes the interconversion of 2-phosphoglycerate and 3-phosphoglycerate. This chain is 2,3-bisphosphoglycerate-dependent phosphoglycerate mutase, found in Streptococcus pyogenes serotype M49 (strain NZ131).